The following is a 130-amino-acid chain: MNFRRENRASRTSLFDGLDGLEEGRLRASSSYAHDERDNDEALENLQDRVSFLKRVTGDIHEEVENHNRLLDKVGNKMDSARGIMSGTINRFKLVFEKKSNRKSCKLIAYFVLLFLIMYYLIRLLNYIKG.

Over 1 to 106 (MNFRRENRAS…EKKSNRKSCK (106 aa)) the chain is Cytoplasmic. Positions 33 to 95 (AHDERDNDEA…SGTINRFKLV (63 aa)) constitute a t-SNARE coiled-coil homology domain. Residues 40–82 (DEALENLQDRVSFLKRVTGDIHEEVENHNRLLDKVGNKMDSAR) are a coiled coil. Residues 107–122 (LIAYFVLLFLIMYYLI) form a helical; Anchor for type IV membrane protein membrane-spanning segment. Residues 123-130 (RLLNYIKG) lie on the Vesicular side of the membrane.

It belongs to the BET1 family.

It is found in the golgi apparatus membrane. It localises to the endoplasmic reticulum membrane. Functionally, required for vesicular transport from the ER to the Golgi complex. Functions as a SNARE associated with ER-derived vesicles. The protein is Bet1-like SNARE 1-2 (BET12) of Arabidopsis thaliana (Mouse-ear cress).